Here is a 116-residue protein sequence, read N- to C-terminus: Flagellar transcriptional regulator FlhD (116 aa).

The protein belongs to the FlhD family. In terms of assembly, homodimer; disulfide-linked. Forms a heterohexamer composed of two FlhC and four FlhD subunits. Each FlhC binds a FlhD dimer, forming a heterotrimer, and a hexamer assembles by dimerization of two heterotrimers.

The protein resides in the cytoplasm. In terms of biological role, functions in complex with FlhC as a master transcriptional regulator that regulates transcription of several flagellar and non-flagellar operons by binding to their promoter region. Activates expression of class 2 flagellar genes, including fliA, which is a flagellum-specific sigma factor that turns on the class 3 genes. Also regulates genes whose products function in a variety of physiological pathways. The chain is Flagellar transcriptional regulator FlhD from Yersinia pseudotuberculosis serotype O:1b (strain IP 31758).